Here is a 694-residue protein sequence, read N- to C-terminus: MAREYKIEDYRNFGIMAHIDAGKTTMTERILFYTGKNHKIGETHDGASTMDWMEQEQERGITITSAATTTFWQGQDGKKRRFNIIDTPGHVDFTIEVERSLRVLDGAIALLDANAGVEPQTETVWRQAEKYHVPRMVFVNKMDKIGADFYRCVEMVGSRLGAVALPVQLPIGAENEFEGVIDLIEMKALTWDGTIGAAATVGEIPEHLKDQAEEYREKLIELAVEIDEAAMEAYLEGTMPTNEQLRALIRKGTIEVKFHPILCGTAFKNRGVQPLLDAVVEFLPAPTDVPAIKGIDVKTETETTRESSDEAPLSMLAFKIMNDPFVGSLTFARIYSGKLTKGVSLENTVKGKRERIGRMLQMHSNSREDIEEAFAGDIVALAGLKETTTGDTLCDPLKPVILERMEFPDPVIEIAIEPKTKADQEKMGIALNRLAAEDPSFRVKSDEESGQTIIAGMGELHLDILVDRMKREFKVEANVGAPQVAYRESITRQAEIDYTHKKQSGGSGQFARVKIIFEPHDGDDFIFESKIVGGSVPKEYIPGVQKGIESVMGAGPLAGFPMLGVKATLIDGAYHDVDSSVLAFEIASRAAFREGAQKAGAQLLEPIMKVEVVTPEDYVGDVIGDLNSRRGQISGTEARGIATVVNANVPLANMFGYVNNLRSMSQGRAQYTMQFDHYEPVPTAVAQEIQKKFA.

Positions 8–287 constitute a tr-type G domain; the sequence is EDYRNFGIMA…AVVEFLPAPT (280 aa). Residues 17-24, 86-90, and 140-143 contribute to the GTP site; these read AHIDAGKT, DTPGH, and NKMD.

Belongs to the TRAFAC class translation factor GTPase superfamily. Classic translation factor GTPase family. EF-G/EF-2 subfamily.

The protein localises to the cytoplasm. Its function is as follows. Catalyzes the GTP-dependent ribosomal translocation step during translation elongation. During this step, the ribosome changes from the pre-translocational (PRE) to the post-translocational (POST) state as the newly formed A-site-bound peptidyl-tRNA and P-site-bound deacylated tRNA move to the P and E sites, respectively. Catalyzes the coordinated movement of the two tRNA molecules, the mRNA and conformational changes in the ribosome. The sequence is that of Elongation factor G from Brucella anthropi (strain ATCC 49188 / DSM 6882 / CCUG 24695 / JCM 21032 / LMG 3331 / NBRC 15819 / NCTC 12168 / Alc 37) (Ochrobactrum anthropi).